We begin with the raw amino-acid sequence, 444 residues long: Ribulose bisphosphate carboxylase (444 aa).

The active-site Proton acceptor is Lys163. A substrate-binding site is contributed by Lys165. The Mg(2+) site is built by Lys189, Asp191, and Glu192. Lys189 is modified (N6-carboxylysine). His281 functions as the Proton acceptor in the catalytic mechanism. Substrate contacts are provided by residues Arg282, His314, 367 to 369, and 389 to 392; these read SGG and QLGG.

Belongs to the RuBisCO large chain family. Type III subfamily. As to quaternary structure, homodimer or homodecamer. In contrast to form I RuBisCO, the form III RuBisCO is composed solely of large subunits. Mg(2+) is required as a cofactor.

The enzyme catalyses 2 (2R)-3-phosphoglycerate + 2 H(+) = D-ribulose 1,5-bisphosphate + CO2 + H2O. The catalysed reaction is D-ribulose 1,5-bisphosphate + O2 = 2-phosphoglycolate + (2R)-3-phosphoglycerate + 2 H(+). In terms of biological role, catalyzes the addition of molecular CO(2) and H(2)O to ribulose 1,5-bisphosphate (RuBP), generating two molecules of 3-phosphoglycerate (3-PGA). Functions in an archaeal AMP degradation pathway, together with AMP phosphorylase and R15P isomerase. The protein is Ribulose bisphosphate carboxylase of Thermococcus onnurineus (strain NA1).